We begin with the raw amino-acid sequence, 232 residues long: Secreted LysM effector Mg3LysM (232 aa).

Positions 1-16 (MQNIFLAATLLGAAFA) are cleaved as a signal peptide. The LysM 1 domain occupies 47–91 (TNYTVKAGDTLGAIAKQYNSGVCDIAKVNGIDNPDYIKPDQVLSI). Asparagine 48, asparagine 100, asparagine 138, asparagine 195, asparagine 209, and asparagine 227 each carry an N-linked (GlcNAc...) asparagine glycan. LysM domains lie at 120 to 165 (STYT…VINT) and 177 to 221 (GTYV…IIIL).

This sequence belongs to the secreted LysM effector family.

Its function is as follows. Secreted effector that enables the plant pathogenic fungus to manipulate host defenses for successful infection. Binds chitin fragments and blocks the activation of chitin-induced plant defense responses. Protects fungal hyphae against hydrolytic plant enzymes. In Zymoseptoria tritici (strain CBS 115943 / IPO323) (Speckled leaf blotch fungus), this protein is Secreted LysM effector Mg3LysM.